Consider the following 334-residue polypeptide: Myo-inositol 2-dehydrogenase (334 aa).

This sequence belongs to the Gfo/Idh/MocA family.

The enzyme catalyses myo-inositol + NAD(+) = scyllo-inosose + NADH + H(+). It functions in the pathway polyol metabolism; myo-inositol metabolism. Its function is as follows. Catalyzes the NAD(+)-dependent oxidation of myo-inositol (MI) to 2-keto-myo-inositol (scyllo-inosose), and thus probably functions in a myo-inositol degradation pathway together with IolM, IolN and IolO. Has no activity with scyllo-inositol and much reduced activity (78-fold lower catalytic efficiency) with 1D-chiro-inositol. This Thermotoga maritima (strain ATCC 43589 / DSM 3109 / JCM 10099 / NBRC 100826 / MSB8) protein is Myo-inositol 2-dehydrogenase.